We begin with the raw amino-acid sequence, 2442 residues long: Piezo-type mechanosensitive ion channel component 1 (2442 aa).

Over 1–5 (MTVPP) the chain is Extracellular. Residues 6-26 (LLKSCVVKLLLPAALLAAAII) form a helical membrane-spanning segment. A topological domain (cytoplasmic) is located at residue Arg27. Residues 28–48 (PSFLSIGYVLLALVSAVLPPI) traverse the membrane as a helical segment. Topologically, residues 49–56 (RKSLALPK) are extracellular. The chain crosses the membrane as a helical span at residues 57 to 77 (LVGTFVIITFLFCLAVALGVG). The Cytoplasmic segment spans residues 78 to 122 (SYQISEQVVHKNDRTYICNRSDTTLFRSIGLVRFHPTGTFESTRA). The helical transmembrane segment at 123 to 143 (FLPEIIATSAALLTIIIVMFL) threads the bilayer. Residues 144-173 (SHRDEQLDVVGDVVTVRSESGREQRRQRKL) lie on the Extracellular side of the membrane. A helical transmembrane segment spans residues 174–196 (AAIMWSAIGNSLRRLTNFVLFLF). Over 197–198 (TA) the chain is Cytoplasmic. The chain crosses the membrane as a helical span at residues 199 to 219 (YVGIVKPSLSNSIYFLAFLFI). The Extracellular segment spans residues 220–239 (STWWSTYTPLRHGVYNQIKK). Residues 240–260 (FLIFYSALHFLVLYTYQIPIV) traverse the membrane as a helical segment. At 261 to 303 (HHSWLPTGSFLPRLFGLTVLMDSSCPEWWKFPFVAPDFNDDDL) the chain is on the cytoplasmic side. Residues 304–324 (IMKWPLYANPIVVLVFFYLTV) traverse the membrane as a helical segment. The Extracellular segment spans residues 325–454 (AQYKFTRNGS…GDKESAASKG (130 aa)). N-linked (GlcNAc...) asparagine glycosylation is found at Asn332, Asn392, and Asn440. The segment at 389–417 (LLSNASSSANDDEQGRARSRSPLRNGEEQ) is disordered. A helical membrane pass occupies residues 455-475 (MIAVMTFVIFHSYSIALTAMM). Topologically, residues 476-478 (TWA) are cytoplasmic. A helical transmembrane segment spans residues 479-499 (LLYHSIFGLILLILTCILWIF). At 500-506 (RDTRKSS) the chain is on the extracellular side. Residues 507–527 (FAMAPIILMYIEFLLILQYFL) traverse the membrane as a helical segment. Over 528–552 (SMDIHAEIGDPAWMNFVGIEWTTLP) the chain is Cytoplasmic. A helical transmembrane segment spans residues 553–573 (VHAVIILCVQTLLTLPVFLLL). Topologically, residues 574-633 (RLARREKFYESLSDYERQRRINSYGTFGASKTGAGGVAVAKFQDPKSRKFAAFVEYLSNK) are extracellular. A helical transmembrane segment spans residues 634–654 (VSVYFIFVVSVVLLVVSTCFA). Topologically, residues 655–656 (PN) are cytoplasmic. The helical transmembrane segment at 657-677 (FYNILFFALWALNLIYLKFSF) threads the bilayer. Residues 678-683 (RLYRGL) are Extracellular-facing. The helical transmembrane segment at 684 to 704 (AYAFWLTLTFYTSIVIIALYI) threads the bilayer. Topologically, residues 705 to 739 (YQFPGVSQWIIRNTSLSQEWLNAIGLVDFRAIGES) are cytoplasmic. A helical membrane pass occupies residues 740–760 (GALFLQLLAPIALFVVTMLQL). At 761–832 (KFFHGPWSRA…WRFFEVHISK (72 aa)) the chain is on the extracellular side. The interval 768-798 (SRATSPRRAENDPPTSTTEAAAVASTSGTQG) is disordered. Residues 782-794 (TSTTEAAAVASTS) are compositionally biased toward low complexity. Asn816 carries an N-linked (GlcNAc...) asparagine glycan. The helical transmembrane segment at 833–853 (IVFVIIAIFIANNINALYIPL) threads the bilayer. The Cytoplasmic segment spans residues 854–874 (VILLSLAICLPSAADGIFSLF). The chain crosses the membrane as a helical span at residues 875–895 (MCAYLFLVALSKMIYQLDIVP). Residues 896–931 (ELSQIDRGVGADNCSHGNISMPEWFGLKKEVEGTEP) lie on the Extracellular side of the membrane. N-linked (GlcNAc...) asparagine glycosylation is found at Asn908 and Asn913. A helical membrane pass occupies residues 932–952 (IYMLFGVIVSIIALAFQSIVI). Topologically, residues 953–990 (YRQRHYRASLGLPESMRAKVFPDFHHSHFDRSLKNAIQ) are cytoplasmic. Residues 991-1011 (FLIDYGFYKFGLEITMIAIGI) traverse the membrane as a helical segment. Asp1012 is a topological domain (extracellular). Residues 1013-1033 (IFNRMDALAAIQCFWLVLFAL) traverse the membrane as a helical segment. Topologically, residues 1034–1041 (NKRVFVRR) are cytoplasmic. A helical membrane pass occupies residues 1042–1062 (IWVFYVIYMAILYPLQFFSYV). The Extracellular segment spans residues 1063–1096 (GLPPDSCIEYPWSYWIPSYSDDARFNLSYLLNLS). 2 N-linked (GlcNAc...) asparagine glycosylation sites follow: Asn1088 and Asn1094. A helical transmembrane segment spans residues 1097-1117 (IYGVNWPSAYLIGDFFVLLLA). The Cytoplasmic portion of the chain corresponds to 1118 to 1160 (SCQLAVFRREGEDNDSIYNDGNFVIKPENPQYDFIDTKKSYVD). Residues 1161–1181 (YFKSFVFHYGHWITLMSTLAA) traverse the membrane as a helical segment. The Extracellular portion of the chain corresponds to 1182 to 1187 (GIAGTS). Residues 1188 to 1210 (LFALGYIIFTLTMLWSGNNLYVM) form a helical membrane-spanning segment. Topologically, residues 1211 to 1231 (NSTLRSFEHTLKRWNALLGYT) are cytoplasmic. Residues 1232-1252 (LFTITMKVCLQIFGCVFLSWF) traverse the membrane as a helical segment. At 1253–1299 (DQSGGWGKTLCIVRQLFSITCVNNECHVLKELEDFSKACAVETKEGN) the chain is on the extracellular side. A helical transmembrane segment spans residues 1300-1320 (IGFDVIALSFLVFQIRIFHSW). Topologically, residues 1321–1615 (YFQHCMVEYR…VVNCIGAHTD (295 aa)) are cytoplasmic. The interval 1463–1502 (DTIKDPDSRALIAVSEPEARKPGGTEETDGDEDEDNKDSK) is disordered. Residues 1488–1498 (EETDGDEDEDN) show a composition bias toward acidic residues. The chain crosses the membrane as a helical span at residues 1616–1636 (ILCYFFAIMTQVMTGGLITLP). Over 1637-1654 (LPLMSLFWGNLSNPRPSK) the chain is Extracellular. A glycan (N-linked (GlcNAc...) asparagine) is linked at Asn1646. A helical transmembrane segment spans residues 1655 to 1675 (FFWVTMITYTECVIVIKFVCQ). The Cytoplasmic segment spans residues 1676 to 1706 (FAFMPYNSITWRTEHQMDPMSLDKLFGVSQR). Residues 1707–1727 (DSFALWDIVLLFSLFFHRYML) form a helical membrane-spanning segment. Residues 1728–1833 (RKLGLWKDAN…KFRYIRDLYP (106 aa)) lie on the Extracellular side of the membrane. Asn1737 carries N-linked (GlcNAc...) asparagine glycosylation. A helical transmembrane segment spans residues 1834 to 1854 (IMFGIDVICFLIMTFGYSAFG). Residues 1855-1866 (EGGSGNVLDDVK) lie on the Cytoplasmic side of the membrane. The helical transmembrane segment at 1867-1887 (ASRIPVTLVVMLVGMTLAIII) threads the bilayer. Topologically, residues 1888 to 1900 (DRALYLRKSVVGK) are extracellular. Residues 1901–1921 (LIYQVLMIAFLHIWVFLVLPN) traverse the membrane as a helical segment. The Cytoplasmic segment spans residues 1922–1930 (MTRRSAISN). The chain crosses the membrane as a helical span at residues 1931 to 1951 (HVAQALYVIKSCYFLVSAWQI). Topologically, residues 1952–2046 (RNGYPELCIG…KGKLVKYMMG (95 aa)) are extracellular. The helical transmembrane segment at 2047–2067 (FPIIIGVVIFIFSPLLLWSLL) threads the bilayer. The Cytoplasmic portion of the chain corresponds to 2068 to 2346 (NQIGTISMPE…VGFIDRAFPS (279 aa)). A helical membrane pass occupies residues 2347-2367 (FLAKVFKGGVIAVYLSVILVV). Topologically, residues 2368-2442 (GRGLVRGIFT…WTRMSKKKQE (75 aa)) are extracellular.

Belongs to the PIEZO (TC 1.A.75) family. In terms of tissue distribution, expressed in the pharyngeal-intestinal and spermathecal-uterine valves and in multiple reproductive tissues including the germline, somatic oviduct, and spermatheca. During reproduction, it is expressed in sheath cells, sperm, both spermathecal valves and the spermathecal bag cells.

The protein localises to the cell membrane. Its function is as follows. Pore-forming subunit of a mechanosensitive non-specific cation channel. Generates currents characterized by a linear current-voltage relationship. Plays a role in reproduction by positively regulating inter-tissue signaling to promote oocyte maturation, ovulation and fertilization, and sperm navigation from and to the spermatheca. May play a role in regulating cytosolic and endoplasmic reticulum calcium ion release. This chain is Piezo-type mechanosensitive ion channel component 1, found in Caenorhabditis elegans.